We begin with the raw amino-acid sequence, 93 residues long: Alpha-conotoxin RVIIIA (93 aa).

Residues 1–20 (MMSKMGAMFVLLLLFTLASS) form the signal peptide. Positions 21-46 (QQEGDVQARKTHPKREFQRILLRSGR) are excised as a propeptide. A 4-carboxyglutamate mark is found at Glu63 and Glu68.

Contains 5 disulfide bonds. As to expression, expressed by the venom duct.

It is found in the secreted. In terms of biological role, alpha-conotoxins act on postsynaptic membranes, they bind to the nicotinic acetylcholine receptors (nAChR) and thus inhibit them. This toxin provokes a nearly complete and slowly reversible inhibition of both the human adult (alpha-1-beta-1-epsilon-delta (CHRNA1-CHRNB1-CHRND-CHRNE)) and human fetal (alpha-1-beta-1-gamma-delta (CHRNA1-CHRNB1-CHRNG-CHRND)) neuromuscular nAChRs. It also reversibly blocks the neuromuscular alpha-7/CHRNA7 nAChR, the alpha-3-beta-2 (CHRNA3-CHRNB2) nAChR, the chimeric alpha-6 or -3/beta-3 or -2 (CHRNA6/CHRNA3-CHRNB2-CHRNB3) nAChR and with a low potency the alpha-4-beta-2 (CHRNA4-CHRNB2) nAChR. In addition, the toxin also inhibits the alpha-9-alpha-10 (CHRNA9-CHRNA10) nAChR with a high potency (IC(50)=187 nM). The sequence is that of Alpha-conotoxin RVIIIA from Conus radiatus (Rayed cone).